The chain runs to 300 residues: NAD kinase (300 aa).

The active-site Proton acceptor is Asp75. NAD(+) contacts are provided by residues 75 to 76 (DG), 149 to 150 (ND), Arg177, Asp179, 190 to 195 (TAYALS), Ala214, and Gln248.

This sequence belongs to the NAD kinase family. It depends on a divalent metal cation as a cofactor.

It localises to the cytoplasm. The catalysed reaction is NAD(+) + ATP = ADP + NADP(+) + H(+). Its function is as follows. Involved in the regulation of the intracellular balance of NAD and NADP, and is a key enzyme in the biosynthesis of NADP. Catalyzes specifically the phosphorylation on 2'-hydroxyl of the adenosine moiety of NAD to yield NADP. The protein is NAD kinase of Paraburkholderia phymatum (strain DSM 17167 / CIP 108236 / LMG 21445 / STM815) (Burkholderia phymatum).